A 546-amino-acid polypeptide reads, in one-letter code: CTP synthase (546 aa).

The tract at residues 1–264 (MRYIVVTGGV…TKYIMKAMRL (264 aa)) is amidoligase domain. Ser12 lines the CTP pocket. Ser12 lines the UTP pocket. ATP-binding positions include 13–18 (GLGKGI) and Asp70. Residues Asp70 and Glu140 each coordinate Mg(2+). CTP is bound by residues 147–149 (DIE), 185–190 (KTKPTQ), and Lys221. UTP-binding positions include 185–190 (KTKPTQ) and Lys221. Residues 298 to 534 (GSQCTDPMKD…VEAMKAQRLR (237 aa)) form the Glutamine amidotransferase type-1 domain. Gly357 serves as a coordination point for L-glutamine. Catalysis depends on Cys384, which acts as the Nucleophile; for glutamine hydrolysis. L-glutamine contacts are provided by residues 385 to 388 (FGMQ), Glu408, and Arg464. Active-site residues include His507 and Glu509.

The protein belongs to the CTP synthase family. In terms of assembly, homotetramer.

It catalyses the reaction UTP + L-glutamine + ATP + H2O = CTP + L-glutamate + ADP + phosphate + 2 H(+). The enzyme catalyses L-glutamine + H2O = L-glutamate + NH4(+). It carries out the reaction UTP + NH4(+) + ATP = CTP + ADP + phosphate + 2 H(+). Its pathway is pyrimidine metabolism; CTP biosynthesis via de novo pathway; CTP from UDP: step 2/2. Allosterically activated by GTP, when glutamine is the substrate; GTP has no effect on the reaction when ammonia is the substrate. The allosteric effector GTP functions by stabilizing the protein conformation that binds the tetrahedral intermediate(s) formed during glutamine hydrolysis. Inhibited by the product CTP, via allosteric rather than competitive inhibition. Functionally, catalyzes the ATP-dependent amination of UTP to CTP with either L-glutamine or ammonia as the source of nitrogen. Regulates intracellular CTP levels through interactions with the four ribonucleotide triphosphates. This chain is CTP synthase, found in Methanothrix thermoacetophila (strain DSM 6194 / JCM 14653 / NBRC 101360 / PT) (Methanosaeta thermophila).